The sequence spans 640 residues: CREB3 regulatory factor (640 aa).

The segment at 308–414 is disordered; the sequence is SPGLVATAES…FSEPGYENDS (107 aa). The span at 317-329 shows a compositional bias: low complexity; it reads SGSLSASTSVSDS. Over residues 356-371 the composition is skewed to acidic residues; it reads EDDEDDEDEFDDEDHD. Over residues 372–381 the composition is skewed to basic and acidic residues; that stretch reads EGFGSEHELS. Residues 382-402 are compositionally biased toward acidic residues; sequence ENEEEEEEEEDYEDDRDDDIS. The region spanning 522–585 is the bZIP domain; the sequence is TARPRSRKEK…VNRVQNPREE (64 aa). The tract at residues 524-533 is basic motif; it reads RPRSRKEKNK. The leucine-zipper stretch occupies residues 534–541; that stretch reads LASRACRL.

Belongs to the bZIP family. CREBRF subfamily. In terms of assembly, interacts (via leucine-zipper domain) with CREB3 (via leucine-zipper domain); the interaction promotes CREB3 degradation. In terms of processing, probably degraded by the proteasome. As to expression, highly expressed in intestin, testis, heart and kidney, weakly in brain adipose, colon, liver, lung and skeletal.

The protein resides in the nucleus. Acts as a negative regulator of the endoplasmic reticulum stress response or unfolded protein response (UPR). Represses the transcriptional activity of CREB3 during the UPR. Recruits CREB3 into nuclear foci. The sequence is that of CREB3 regulatory factor (Crebrf) from Mus musculus (Mouse).